Reading from the N-terminus, the 590-residue chain is MPKRKIAPNKESSRRTVSHDDLTPQIQEFQNLMDLESQKVENIRQSYSRQNSLLAKDNSILKIKVNSLEKKISQLVQENVTLRSKTSISEAIYRERLSNQLQVIENGIIQRFDEIFYMFENVRKNENLPSSSLRTMLKRTSSRSRSCSLSSPTYSKSYTRLSNHENNLSHESSFNKDDGPDLEPKAKKRKSSRRQSMFVSTSLEPEDETGENEPMMENSSVEVPAESHESAQVEETIDALNPEEENSDSVSNFTNSIIEYSIPEENPTEPEHSSSKLEIFNDSTNMLSTVPSNPLPLPLPGPSATLPTTTSDASTVYPSSSSSTNSHPKTKIKHSMKPPRIELKKKVIDEVMPVSNMSSNSEISFTRTRRTRGKAVDYTLPSLRAKMRRPSEKLVDATTVIDIHDLQVSKRNRETSHKRKSLSQDSIPDEPQLREVVVSKDYGTPKGKKTEDEIHEDTAHLMTTSNNNSNNKNEKKLTSNNSPKKSSPLLDITNKSENKKKSTRTKKLFKNAIVNNLSDENSTTRPSKSSKGTSNNNNNYNNFDNNNSNINNVNNKSVSFRLNEDDLAVFDLFGNGKAVKHQPKTYRTKK.

The segment at 1-20 is disordered; that stretch reads MPKRKIAPNKESSRRTVSHD. The span at 11–20 shows a compositional bias: basic and acidic residues; sequence ESSRRTVSHD. A coiled-coil region spans residues 25 to 86; that stretch reads QIQEFQNLMD…QENVTLRSKT (62 aa). Disordered regions lie at residues 133-235, 291-337, and 411-550; these read LRTM…QVEE, PSNP…HSMK, and RNRE…NSNI. Residues 173-185 are compositionally biased toward basic and acidic residues; it reads SFNKDDGPDLEPK. A compositionally biased stretch (low complexity) spans 302 to 326; it reads PSATLPTTTSDASTVYPSSSSSTNS. The span at 328-337 shows a compositional bias: basic residues; the sequence is PKTKIKHSMK. Over residues 448–459 the composition is skewed to basic and acidic residues; sequence KKTEDEIHEDTA. Over residues 513-526 the composition is skewed to polar residues; the sequence is IVNNLSDENSTTRP. Positions 527–550 are enriched in low complexity; the sequence is SKSSKGTSNNNNNYNNFDNNNSNI.

Belongs to the shugoshin family. In terms of processing, ubiquitinated by the anaphase promoting complex (APC) at the onset of anaphase, conducting to its degradation.

The protein resides in the chromosome. It localises to the centromere. The protein localises to the kinetochore. Its subcellular location is the cytoplasm. It is found in the cytoskeleton. The protein resides in the spindle pole. Functionally, plays a central role in chromosome cohesion during mitosis and meiosis divisions by preventing premature dissociation of cohesin complex from centromeres after prophase, when most of cohesin complex dissociates from chromosomes arms. Probably act by protecting REC8 and RAD21 from separase degradation during anaphase. Also acts as a spindle checkpoint component required for sensing tension between sister chromatids during mitosis, its degradation when they separate preventing cell cycle arrest and chromosome loss in anaphase, a time when sister chromatids are no longer under tension. This chain is Shugoshin (SGO1), found in Saccharomyces cerevisiae (strain ATCC 204508 / S288c) (Baker's yeast).